The sequence spans 426 residues: Alpha/beta hydrolase pydG (426 aa).

This sequence belongs to the AB hydrolase superfamily. Homodimer.

The protein operates within mycotoxin biosynthesis. Functionally, alpha/beta hydrolasee; part of the gene cluster that mediates the biosynthesis of pyrrocidines, fungal natural products containing a macrocyclic para-cyclophane connected to a decahydrofluorene ring system that show potent antibiotic activities toward Gram-negative bacteria. Within the pathway, pydG catalyzes the Knoevenagel condensation that affords the 3-pyrrolin-2-one ring, using as substrate the polyketide-tyrosyl acyl thioester product of pydA. The pathway begins with the PKS-NRPS pydA which, with the help of the trans-enoyl reductase pydC, synthesizes the polyketide-tyrosyl acyl thioester product which can be reductively off-loaded by the terminal reductase (R) domain in pydA. The alpha/beta hydrolase pydG is then required to catalyze the subsequent Knoevenagel condensation that affords the 3-pyrrolin-2-one ring, whereas the four proteins pydB, pydE, pydX and pydZ then function synergistically to form the cyclophane. PydB and the membrane-bound pydX and pydZ are lipid-binding proteins that can sequester and mold the pdyG product into the inverse S-shape. Binding of the medium chain reductase pydE to the complex would trigger the cascade oxidative cyclization. PydY is involved in the Diels-Alder cycloaddition that forms the decahydrofluorene core. Additional non-enzymatic hydroxylation yields pyrrocidine A2 which can be further reduced into pyrrocidine B by an endogenous reductase. In Acremonium sp, this protein is Alpha/beta hydrolase pydG.